A 205-amino-acid chain; its full sequence is Protein TK0174 (205 aa).

In terms of domain architecture, AMMECR1 spans 7–201; the sequence is EWGEFLVRLA…EEYPRGPVRR (195 aa).

The polypeptide is Protein TK0174 (Thermococcus kodakarensis (strain ATCC BAA-918 / JCM 12380 / KOD1) (Pyrococcus kodakaraensis (strain KOD1))).